Here is a 434-residue protein sequence, read N- to C-terminus: Enolase (434 aa).

Glutamine 163 contributes to the (2R)-2-phosphoglycerate binding site. The active-site Proton donor is glutamate 205. Mg(2+) contacts are provided by aspartate 242, glutamate 291, and aspartate 318. The (2R)-2-phosphoglycerate site is built by lysine 343, arginine 372, serine 373, and lysine 394. Lysine 343 functions as the Proton acceptor in the catalytic mechanism.

Belongs to the enolase family. The cofactor is Mg(2+).

It is found in the cytoplasm. The protein localises to the secreted. Its subcellular location is the cell surface. It carries out the reaction (2R)-2-phosphoglycerate = phosphoenolpyruvate + H2O. It participates in carbohydrate degradation; glycolysis; pyruvate from D-glyceraldehyde 3-phosphate: step 4/5. Functionally, catalyzes the reversible conversion of 2-phosphoglycerate (2-PG) into phosphoenolpyruvate (PEP). It is essential for the degradation of carbohydrates via glycolysis. This Streptococcus gordonii (strain Challis / ATCC 35105 / BCRC 15272 / CH1 / DL1 / V288) protein is Enolase.